Reading from the N-terminus, the 116-residue chain is U3-theraphotoxin-Lsp1a (116 aa).

The first 17 residues, 1–17 (MKLSTFIIMISLAVALA), serve as a signal peptide directing secretion. Positions 18–50 (TWPSEHIEGSDSETKLNVELGPYALADRAEKGK) are excised as a propeptide.

It belongs to the neurotoxin 25 family. F7 subfamily. In terms of processing, contains 3 disulfide bonds. In terms of tissue distribution, expressed by the venom gland.

The protein resides in the secreted. In Lasiodora sp. (strain IBSP 8539) (Brazilian salmon pink birdeater), this protein is U3-theraphotoxin-Lsp1a.